A 251-amino-acid chain; its full sequence is Putative (5-formylfuran-3-yl)methyl phosphate synthase (251 aa).

The active-site Schiff-base intermediate with substrate is lysine 29. Residue lysine 87 is the Proton acceptor of the active site.

It belongs to the MfnB family.

It carries out the reaction 2 D-glyceraldehyde 3-phosphate = 4-(hydroxymethyl)-2-furancarboxaldehyde phosphate + phosphate + 2 H2O. In terms of biological role, catalyzes the formation of 4-(hydroxymethyl)-2-furancarboxaldehyde phosphate (4-HFC-P) from two molecules of glyceraldehyde-3-P (GA-3-P). This Kitasatospora aureofaciens (Streptomyces aureofaciens) protein is Putative (5-formylfuran-3-yl)methyl phosphate synthase.